The following is a 183-amino-acid chain: Peptidyl-tRNA hydrolase (183 aa).

A tRNA-binding site is contributed by Tyr14. Residue His19 is the Proton acceptor of the active site. Residues Tyr55 and Asn57 each coordinate tRNA.

It belongs to the PTH family. Monomer.

Its subcellular location is the cytoplasm. The catalysed reaction is an N-acyl-L-alpha-aminoacyl-tRNA + H2O = an N-acyl-L-amino acid + a tRNA + H(+). In terms of biological role, hydrolyzes ribosome-free peptidyl-tRNAs (with 1 or more amino acids incorporated), which drop off the ribosome during protein synthesis, or as a result of ribosome stalling. Catalyzes the release of premature peptidyl moieties from peptidyl-tRNA molecules trapped in stalled 50S ribosomal subunits, and thus maintains levels of free tRNAs and 50S ribosomes. The sequence is that of Peptidyl-tRNA hydrolase from Thermus thermophilus (strain ATCC BAA-163 / DSM 7039 / HB27).